Reading from the N-terminus, the 184-residue chain is Cytidylate kinase (184 aa).

8–16 (GQPGSGKTT) lines the ATP pocket.

The protein belongs to the cytidylate kinase family. Type 2 subfamily.

The protein localises to the cytoplasm. The catalysed reaction is CMP + ATP = CDP + ADP. The enzyme catalyses dCMP + ATP = dCDP + ADP. The chain is Cytidylate kinase from Pyrobaculum islandicum (strain DSM 4184 / JCM 9189 / GEO3).